Here is a 184-residue protein sequence, read N- to C-terminus: Ribosome-recycling factor (184 aa).

The protein belongs to the RRF family.

Its subcellular location is the cytoplasm. Functionally, responsible for the release of ribosomes from messenger RNA at the termination of protein biosynthesis. May increase the efficiency of translation by recycling ribosomes from one round of translation to another. This Natranaerobius thermophilus (strain ATCC BAA-1301 / DSM 18059 / JW/NM-WN-LF) protein is Ribosome-recycling factor.